The primary structure comprises 191 residues: ECF RNA polymerase sigma-E factor (191 aa).

The tract at residues 1–153 (MSEQLTDQVL…MAITLRELDG (153 aa)) is binds RNAP core. Residues 25 to 92 (LVVRYQHKVA…KNYLVAQGRR (68 aa)) form a sigma-70 factor domain-2 region. The Polymerase core binding signature appears at 48-61 (DVVQEAFIKAYRAL). A sigma-70 factor domain-4 region spans residues 129-180 (QIVFRTIESLPEDLRMAITLRELDGLSYEEIAAIMDCPVGTVRSRIFRAREA). The segment at residues 156 to 175 (YEEIAAIMDCPVGTVRSRIF) is a DNA-binding region (H-T-H motif).

This sequence belongs to the sigma-70 factor family. ECF subfamily. As to quaternary structure, interacts transiently with the RNAP catalytic core formed by RpoA, RpoB, RpoC and RpoZ (2 alpha, 1 beta, 1 beta' and 1 omega subunit) to form the RNAP holoenzyme that can initiate transcription. Interacts 1:1 with anti-sigma-E factor RseA which prevents binding to RNAP catalytic core.

It is found in the cytoplasm. Its activity is regulated as follows. ECF sigma-E is held in an inactive form by its cognate anti-sigma factor (RseA) until released by regulated intramembrane proteolysis (RIP). RIP occurs when an extracytoplasmic signal (periplasmic stress and excess LPS) triggers a concerted proteolytic cascade to transmit information and elicit cellular responses. The anti-sigma factor RseA is an inner membrane protein, binding sigma-E in the cytoplasm and RseB in the periplasm. RseA is first cut extracytoplasmically (site-1 protease, S1P, by DegS), then within the membrane itself (site-2 protease, S2P, by RseP), while cytoplasmic proteases (predominantly ClpX-ClpP) finish degrading the regulatory protein, liberating sigma-E. Degradation of RseA requires 2 signals to activate DegS; an outer membrane protein (OMP) signal activates DegS, while an LPS signal causes release of RseB from RseA, freeing RseA to be cleaved. Its function is as follows. Sigma factors are initiation factors that promote the attachment of RNA polymerase (RNAP) to specific initiation sites and are then released. Extracytoplasmic function (ECF) sigma-E controls the envelope stress response, responding to periplasmic protein stress, increased levels of periplasmic lipopolysaccharide (LPS) as well as heat shock and oxidative stress; it controls protein processing in the extracytoplasmic compartment. The chain is ECF RNA polymerase sigma-E factor (rpoE) from Escherichia coli O157:H7.